The chain runs to 119 residues: Ribosome-binding factor A (119 aa).

This sequence belongs to the RbfA family. Monomer. Binds 30S ribosomal subunits, but not 50S ribosomal subunits or 70S ribosomes.

It localises to the cytoplasm. In terms of biological role, one of several proteins that assist in the late maturation steps of the functional core of the 30S ribosomal subunit. Associates with free 30S ribosomal subunits (but not with 30S subunits that are part of 70S ribosomes or polysomes). Required for efficient processing of 16S rRNA. May interact with the 5'-terminal helix region of 16S rRNA. The chain is Ribosome-binding factor A from Mycoplasmoides gallisepticum (strain R(low / passage 15 / clone 2)) (Mycoplasma gallisepticum).